The chain runs to 599 residues: Sulfite reductase [NADPH] flavoprotein alpha-component (599 aa).

One can recognise a Flavodoxin-like domain in the interval isoleucine 63–valine 201. FMN contacts are provided by residues serine 69–alanine 74, serine 116–glycine 119, and leucine 152–cysteine 161. The region spanning glutamate 234–proline 448 is the FAD-binding FR-type domain. Residues threonine 322, histidine 356, arginine 386–serine 389, threonine 404–glycine 406, tyrosine 410, and glycine 419–serine 422 contribute to the FAD site. NADP(+) contacts are provided by residues serine 519–arginine 520, lysine 525–glutamine 529, and aspartate 561. Tyrosine 599 contacts FAD.

The protein belongs to the NADPH-dependent sulphite reductase flavoprotein subunit CysJ family. It in the N-terminal section; belongs to the flavodoxin family. This sequence in the C-terminal section; belongs to the flavoprotein pyridine nucleotide cytochrome reductase family. As to quaternary structure, alpha(8)-beta(8). The alpha component is a flavoprotein, the beta component is a hemoprotein. FAD serves as cofactor. It depends on FMN as a cofactor.

It carries out the reaction hydrogen sulfide + 3 NADP(+) + 3 H2O = sulfite + 3 NADPH + 4 H(+). The protein operates within sulfur metabolism; hydrogen sulfide biosynthesis; hydrogen sulfide from sulfite (NADPH route): step 1/1. Functionally, component of the sulfite reductase complex that catalyzes the 6-electron reduction of sulfite to sulfide. This is one of several activities required for the biosynthesis of L-cysteine from sulfate. The flavoprotein component catalyzes the electron flow from NADPH -&gt; FAD -&gt; FMN to the hemoprotein component. This chain is Sulfite reductase [NADPH] flavoprotein alpha-component, found in Serratia proteamaculans (strain 568).